The primary structure comprises 434 residues: Probable glycine dehydrogenase (decarboxylating) subunit 1 (434 aa).

This sequence belongs to the GcvP family. N-terminal subunit subfamily. In terms of assembly, the glycine cleavage system is composed of four proteins: P, T, L and H. In this organism, the P 'protein' is a heterodimer of two subunits.

It carries out the reaction N(6)-[(R)-lipoyl]-L-lysyl-[glycine-cleavage complex H protein] + glycine + H(+) = N(6)-[(R)-S(8)-aminomethyldihydrolipoyl]-L-lysyl-[glycine-cleavage complex H protein] + CO2. Its function is as follows. The glycine cleavage system catalyzes the degradation of glycine. The P protein binds the alpha-amino group of glycine through its pyridoxal phosphate cofactor; CO(2) is released and the remaining methylamine moiety is then transferred to the lipoamide cofactor of the H protein. In Thermoplasma volcanium (strain ATCC 51530 / DSM 4299 / JCM 9571 / NBRC 15438 / GSS1), this protein is Probable glycine dehydrogenase (decarboxylating) subunit 1.